Reading from the N-terminus, the 246-residue chain is 2,3-bisphosphoglycerate-dependent phosphoglycerate mutase (246 aa).

Residues 9–16, 22–23, Arg-61, 88–91, Lys-99, 115–116, and 181–182 contribute to the substrate site; these read RHGQSAWN, TG, ERHY, RR, and GN. His-10 (tele-phosphohistidine intermediate) is an active-site residue. Residue Glu-88 is the Proton donor/acceptor of the active site.

Belongs to the phosphoglycerate mutase family. BPG-dependent PGAM subfamily.

It carries out the reaction (2R)-2-phosphoglycerate = (2R)-3-phosphoglycerate. It participates in carbohydrate degradation; glycolysis; pyruvate from D-glyceraldehyde 3-phosphate: step 3/5. In terms of biological role, catalyzes the interconversion of 2-phosphoglycerate and 3-phosphoglycerate. This Bifidobacterium longum (strain DJO10A) protein is 2,3-bisphosphoglycerate-dependent phosphoglycerate mutase.